A 1036-amino-acid chain; its full sequence is UDP-N-acetylglucosamine--peptide N-acetylglucosaminyltransferase 110 kDa subunit (1036 aa).

Position 2 is an N-acetylalanine (A2). Phosphoserine; by GSK3-beta; alternate is present on residues S3 and S4. Residues S3 and S4 are each glycosylated (O-linked (GlcNAc) serine; alternate). TPR repeat units follow at residues 11–44 (STGL…EPDN), 79–112 (AEAY…KPDF), 113–146 (IDGY…NPDL), 147–180 (YCVR…QPNF), 181–214 (AVAW…DPNF), 215–248 (LDAY…SPNH), 249–282 (AVVH…QPHF), 283–316 (PDAY…CPTH), 317–350 (ADSL…FPEF), 351–384 (AAAH…SPTF), 385–418 (ADAY…NPAF), and 419–452 (ADAH…KPDF). A glycan (O-linked (GlcNAc) serine; by autocatalysis) is linked at S389. Phosphothreonine is present on T444. One copy of the TPR 13; truncated repeat lies at 453-463 (PDAYCNLAHCL). The DFP motif signature appears at 454–456 (DAY). The short motif at 478-493 (KLVSIVAEQLEKNRLP) is the Nuclear localization signal element. Catalysis depends on H498, which acts as the Proton acceptor. Residues Q839, K842, 896–898 (APK), 901–904 (HVRR), 920–922 (HTT), and D925 each bind UDP. Y979 carries the post-translational modification Phosphotyrosine. The interval 981–1000 (KKIRGKVWKQRISSPLFNTK) is required for phosphatidylinositol 3,4,5-triphosphate binding.

It belongs to the glycosyltransferase 41 family. O-GlcNAc transferase subfamily. In terms of assembly, monomer; may exist in different oligomerization states in cells. Homotrimer, oligomerizes via TPR repeats 6 and 7. Trimerization is not necessary for activity in vitro, however it increases affinity for UDP-GlcNAc. A heterotrimer consisting of two 110 kDa subunits and one highly related 78 kDa subunit is isolated from liver. Component of a THAP1/THAP3-HCFC1-OGT complex. Component of the NSL complex at least composed of MOF/KAT8, KANSL1, KANSL2, KANSL3, MCRS1, PHF20, OGT1/OGT, WDR5 and HCFC1. Found in a complex with KIF5B, RHOT1, RHOT2 and TRAK1. Found in a complex composed of at least SINHCAF, SIN3A, HDAC1, SAP30, RBBP4, OGT and TET1. Component of a complex composed of KMT2E/MLL5, OGT and USP7; the complex stabilizes KMT2E/MLL5, preventing KMT2E/MLL5 ubiquitination and proteasomal-mediated degradation. Interacts (via TPRs 1-6) with SIN3A; the interaction mediates transcriptional repression in parallel with histone deacetylase. Interacts (via TPR 5-6) with TET1, TET2 and TET3. Interacts (via TPR repeats 6 and 7) with ATXN10. Interacts with NSD2. Interacts with PROSER1; this interaction mediates TET2 O-GlcNAcylation and stability by promoting the interaction between OGT and TET2. In terms of processing, several different immunologically-related forms of this protein are found in different tissues (with apparent molecular weights of 110, 80 and 78 kDa); they are probably the result of alternative splicing and/or proteolysis. Post-translationally, O-glycosylated; contains O-GlcNAc. Both p110 and p78 forms are O-glycosylated. Ubiquitinated by the SCF(FBXO31) complex, leading to its proteasomal degradation. In terms of processing, phosphorylation on Ser-3 or Ser-4 by GSK3-beta positively regulates its activity. Phosphorylation at Thr-444 by AMPK promotes nuclear localization. Post-translationally, glycosylated via autocatalysis; O-GlcNAcylation at Ser-389 promotes nuclear localization. Expressed in brain, heart, liver, thymus, muscle, lung, spleen, uterus and ovary; in the kidney only an immunologically-related 78 kDa band is present, which is also present in liver and muscle. In the pancreas, expressed in both exocrine acinar cells and in endocrine cells of the islets of Langerhans.

It is found in the cytoplasm. Its subcellular location is the nucleus. The protein localises to the cell membrane. The protein resides in the mitochondrion membrane. It localises to the cell projection. The catalysed reaction is L-seryl-[protein] + UDP-N-acetyl-alpha-D-glucosamine = 3-O-(N-acetyl-beta-D-glucosaminyl)-L-seryl-[protein] + UDP + H(+). It catalyses the reaction L-threonyl-[protein] + UDP-N-acetyl-alpha-D-glucosamine = 3-O-(N-acetyl-beta-D-glucosaminyl)-L-threonyl-[protein] + UDP + H(+). The protein operates within protein modification; protein glycosylation. Its activity is regulated as follows. Inhibited by UDP, UTP and UDP-GlcNAc; 50 mM NaCl or KCl inhibit activity about 70%. Its function is as follows. Catalyzes the transfer of a single N-acetylglucosamine from UDP-GlcNAc to a serine or threonine residue in cytoplasmic and nuclear proteins resulting in their modification with a beta-linked N-acetylglucosamine (O-GlcNAc). Glycosylates a large and diverse number of proteins including histone H2B, AKT1, AMPK, ATG4B, CAPRIN1, EZH2, FNIP1, GSDMD, KRT7, LMNA, LMNB1, LMNB2, RPTOR, HOXA1, PFKL, KMT2E/MLL5, MAPT/TAU, TET2, RBL2, RET, NOD2 and HCFC1. Can regulate their cellular processes via cross-talk between glycosylation and phosphorylation or by affecting proteolytic processing. Involved in insulin resistance in muscle and adipocyte cells via glycosylating insulin signaling components and inhibiting the 'Thr-308' phosphorylation of AKT1, enhancing IRS1 phosphorylation and attenuating insulin signaling. Involved in glycolysis regulation by mediating glycosylation of 6-phosphofructokinase PFKL, inhibiting its activity. Plays a key role in chromatin structure by mediating O-GlcNAcylation of 'Ser-112' of histone H2B: recruited to CpG-rich transcription start sites of active genes via its interaction with TET proteins (TET1, TET2 or TET3). As part of the NSL complex indirectly involved in acetylation of nucleosomal histone H4 on several lysine residues. O-GlcNAcylation of 'Ser-75' of EZH2 increases its stability, and facilitating the formation of H3K27me3 by the PRC2/EED-EZH2 complex. Stabilizes KMT2E/MLL5 by mediating its glycosylation, thereby preventing KMT2E/MLL5 ubiquitination. Regulates circadian oscillation of the clock genes and glucose homeostasis in the liver. Stabilizes clock proteins BMAL1 and CLOCK through O-glycosylation, which prevents their ubiquitination and subsequent degradation. Promotes the CLOCK-BMAL1-mediated transcription of genes in the negative loop of the circadian clock such as PER1/2 and CRY1/2. O-glycosylates HCFC1 and regulates its proteolytic processing and transcriptional activity. Component of a THAP1/THAP3-HCFC1-OGT complex that is required for the regulation of the transcriptional activity of RRM1. Regulates mitochondrial motility in neurons by mediating glycosylation of TRAK1. Promotes autophagy by mediating O-glycosylation of ATG4B. Acts as a regulator of mTORC1 signaling by mediating O-glycosylation of RPTOR and FNIP1: O-GlcNAcylation of RPTOR in response to glucose sufficiency promotes activation of the mTORC1 complex. This chain is UDP-N-acetylglucosamine--peptide N-acetylglucosaminyltransferase 110 kDa subunit (Ogt), found in Rattus norvegicus (Rat).